Reading from the N-terminus, the 113-residue chain is MFNSTALVIFAILFLLISADAFPIPSPNGEIDAMLIRNSIIGEDEDLMPTEISRRVLMAQKRYIGYETLRRDMVPCQKPGASYYDCRSGQANSYSRGCDTITRCARDTNDINT.

An N-terminal signal peptide occupies residues 1–21; it reads MFNSTALVIFAILFLLISADA. A propeptide spans 22-58 (removed in mature form); it reads FPIPSPNGEIDAMLIRNSIIGEDEDLMPTEISRRVLM. Intrachain disulfides connect Cys76–Cys86 and Cys98–Cys104.

Belongs to the plant rapid alkalinization factor (RALF) family. In terms of processing, proteolytically cleaved, probably by S1P, a subtilisin-like serine protease (subtilase).

Its subcellular location is the secreted. Its function is as follows. Cell signaling peptide that may regulate plant stress, growth, and development. Mediates a rapid alkalinization of extracellular space by mediating a transient increase in the cytoplasmic Ca(2+) concentration leading to a calcium-dependent signaling events through a cell surface receptor and a concomitant activation of some intracellular mitogen-activated protein kinases. This chain is Protein RALF-like 31 (RALFL31), found in Arabidopsis thaliana (Mouse-ear cress).